The chain runs to 655 residues: NADH-ubiquinone oxidoreductase chain 5 (655 aa).

16 helical membrane passes run 3 to 23, 34 to 54, 84 to 104, 116 to 136, 137 to 157, 180 to 200, 204 to 224, 244 to 264, 276 to 296, 304 to 322, 332 to 354, 370 to 390, 413 to 433, 456 to 476, 516 to 536, and 629 to 649; these read NAIS…LFFG, MTST…YQLL, LTIT…IYSI, FFSL…GSNY, FVLF…ISFW, FFVL…YSTI, AYLI…IAAM, TPVS…YLLL, VLFI…LIAI, IIAL…AIGL, LLGH…HSIL, LPYT…MPGL, VVYW…MKIL, IYIT…GWIL, ISAI…AIVF, and LLLV…LISI.

This sequence belongs to the complex I subunit 5 family. As to quaternary structure, complex I is composed of 37 different subunits.

Its subcellular location is the mitochondrion inner membrane. It catalyses the reaction a ubiquinone + NADH + 5 H(+)(in) = a ubiquinol + NAD(+) + 4 H(+)(out). Functionally, core subunit of the mitochondrial membrane respiratory chain NADH dehydrogenase (Complex I) that is believed to belong to the minimal assembly required for catalysis. Complex I functions in the transfer of electrons from NADH to the respiratory chain. The immediate electron acceptor for the enzyme is believed to be ubiquinone. In Yarrowia lipolytica (strain CLIB 122 / E 150) (Yeast), this protein is NADH-ubiquinone oxidoreductase chain 5 (ND5).